A 225-amino-acid chain; its full sequence is Adenosylcobinamide-GDP ribazoletransferase (225 aa).

The next 5 membrane-spanning stretches (helical) occupy residues 34–54 (FVGI…FWFL), 93–113 (NLGT…FYSF), 116–136 (VSAF…LLLL), 165–185 (PLLL…AITI), and 204–224 (VVGA…YFLA).

The protein belongs to the CobS family. It depends on Mg(2+) as a cofactor.

The protein resides in the cell membrane. It catalyses the reaction alpha-ribazole + adenosylcob(III)inamide-GDP = adenosylcob(III)alamin + GMP + H(+). The enzyme catalyses alpha-ribazole 5'-phosphate + adenosylcob(III)inamide-GDP = adenosylcob(III)alamin 5'-phosphate + GMP + H(+). Its pathway is cofactor biosynthesis; adenosylcobalamin biosynthesis; adenosylcobalamin from cob(II)yrinate a,c-diamide: step 7/7. Joins adenosylcobinamide-GDP and alpha-ribazole to generate adenosylcobalamin (Ado-cobalamin). Also synthesizes adenosylcobalamin 5'-phosphate from adenosylcobinamide-GDP and alpha-ribazole 5'-phosphate. This is Adenosylcobinamide-GDP ribazoletransferase (cobS1) from Archaeoglobus fulgidus (strain ATCC 49558 / DSM 4304 / JCM 9628 / NBRC 100126 / VC-16).